The chain runs to 478 residues: Cytochrome c-552 (478 aa).

Residues 1–26 (MARKTLRARRFFSLIFPFFFITSVYA) form the signal peptide. Residue H94 participates in heme c binding. Residues C122, C125, and K126 each coordinate heme. Residues C160, C163, H164, C209, C212, and H213 each contribute to the heme c site. The Ca(2+) site is built by E215, Y216, K261, and Q263. Y216 is a binding site for substrate. H264 serves as a coordination point for substrate. Heme c-binding residues include H275, C282, C285, H286, H301, C314, C317, H318, and H393.

It belongs to the cytochrome c-552 family. The cofactor is Ca(2+). Heme c is required as a cofactor.

It is found in the periplasm. The catalysed reaction is 6 Fe(III)-[cytochrome c] + NH4(+) + 2 H2O = 6 Fe(II)-[cytochrome c] + nitrite + 8 H(+). It participates in nitrogen metabolism; nitrate reduction (assimilation). In terms of biological role, catalyzes the reduction of nitrite to ammonia, consuming six electrons in the process. The polypeptide is Cytochrome c-552 (Salmonella schwarzengrund (strain CVM19633)).